The primary structure comprises 311 residues: Retinol dehydrogenase 8 (311 aa).

Position 9 to 18 (9 to 18 (LISGCSSGIG)) interacts with NADP(+). The next 3 membrane-spanning stretches (helical) occupy residues 86–106 (VLVN…SLAA), 137–157 (IVVI…VYAA), and 169–189 (LAIQ…GPVV). Serine 142 provides a ligand contact to substrate. Tyrosine 155 functions as the Proton acceptor in the catalytic mechanism.

It belongs to the short-chain dehydrogenases/reductases (SDR) family. Detected in photoreceptor outer segments in the retina (at protein level).

It localises to the membrane. The enzyme catalyses all-trans-retinol + NADP(+) = all-trans-retinal + NADPH + H(+). Its function is as follows. Retinol dehydrogenase with a clear preference for NADP. Converts all-trans-retinal to all-trans-retinol. May play a role in the regeneration of visual pigment at high light intensity. The polypeptide is Retinol dehydrogenase 8 (RDH8) (Homo sapiens (Human)).